The sequence spans 296 residues: MEQFRNIGIIGRLGSSQVLDTIRRLKKFLLERHLHVILEDTIAEVLPGHGLQTSTRKLLGEVCDLVIVVGGDGSLLGAARALARHNIPVLGINRGNLGFLTDIRPDELEEKVAAVLDGHYLVENRFLLQAEVRRHHEAIGQGDALNDVVLHPGKSTRMIEFEIYIDGQFVCSQKADGLIVATPTGSTAYALSAGGPIMHPKLDAIVIVPMYPHTLSGRPIVVDGNSELKIVVSKDLQIYPQVSCDGQNHFTCAPGDTITVSKKPQKLRLIHPLGHNYYEVCRTKLGWGSRLGGRDD.

Asp72 (proton acceptor) is an active-site residue. NAD(+)-binding positions include 72–73, 146–147, Arg157, Lys174, Asp176, 187–192, and Gln247; these read DG, ND, and TAYALS.

This sequence belongs to the NAD kinase family. Requires a divalent metal cation as cofactor.

The protein resides in the cytoplasm. It catalyses the reaction NAD(+) + ATP = ADP + NADP(+) + H(+). Its function is as follows. Involved in the regulation of the intracellular balance of NAD and NADP, and is a key enzyme in the biosynthesis of NADP. Catalyzes specifically the phosphorylation on 2'-hydroxyl of the adenosine moiety of NAD to yield NADP. In Pseudomonas putida (strain W619), this protein is NAD kinase.